The primary structure comprises 213 residues: Imidazole glycerol phosphate synthase subunit HisH (213 aa).

The Glutamine amidotransferase type-1 domain maps to serine 4–proline 213. Cysteine 83 (nucleophile) is an active-site residue. Residues histidine 193 and glutamate 195 contribute to the active site.

In terms of assembly, heterodimer of HisH and HisF.

Its subcellular location is the cytoplasm. The catalysed reaction is 5-[(5-phospho-1-deoxy-D-ribulos-1-ylimino)methylamino]-1-(5-phospho-beta-D-ribosyl)imidazole-4-carboxamide + L-glutamine = D-erythro-1-(imidazol-4-yl)glycerol 3-phosphate + 5-amino-1-(5-phospho-beta-D-ribosyl)imidazole-4-carboxamide + L-glutamate + H(+). It catalyses the reaction L-glutamine + H2O = L-glutamate + NH4(+). It functions in the pathway amino-acid biosynthesis; L-histidine biosynthesis; L-histidine from 5-phospho-alpha-D-ribose 1-diphosphate: step 5/9. IGPS catalyzes the conversion of PRFAR and glutamine to IGP, AICAR and glutamate. The HisH subunit catalyzes the hydrolysis of glutamine to glutamate and ammonia as part of the synthesis of IGP and AICAR. The resulting ammonia molecule is channeled to the active site of HisF. The chain is Imidazole glycerol phosphate synthase subunit HisH from Burkholderia multivorans (strain ATCC 17616 / 249).